A 328-amino-acid chain; its full sequence is Probable nicotianamine synthase 6 (328 aa).

The protein belongs to the nicotianamine synthase (NAS)-like family.

The enzyme catalyses 3 S-adenosyl-L-methionine = nicotianamine + 3 S-methyl-5'-thioadenosine + 3 H(+). Its function is as follows. Synthesizes nicotianamine, a polyamine that is the first intermediate in the synthesis of the phytosiderophores of the mugineic acid type found in gramineae which serves as a sensor for the physiological iron status within the plant, and/or might be involved in the transport of iron. The sequence is that of Probable nicotianamine synthase 6 (NAS6) from Hordeum vulgare (Barley).